The primary structure comprises 603 residues: Glutathione-regulated potassium-efflux system protein KefB (603 aa).

A run of 13 helical transmembrane segments spans residues 5–25 (ALLTAGVLFLFVAVVAVPIAA), 29–49 (IGAVLGYLIAGIAIGPWGLGF), 53–73 (VEAILHFSELGVVFLMFIIGL), 87–107 (IFGVGAAQVGLSALILGGALY), 115–135 (SALIGGVGLAMSSTAMALQLM), 152–172 (VLLFQDLAVIPALALIPILAG), 180–202 (WERIGLKVAAFLGMLIGGRYLVR), 207–227 (FIAASGVREVFTAAALLLVLG), 230–250 (LFMEALGLSMALGTFIAGILL), 268–288 (GLLLGLFFISVGMALNLGILY), 291–311 (IVKIMIAVLVLVAVKGAVLYF), 326–346 (FAGVLSQGGEFAFVLFSAAAS), and 356–376 (PLLLVTVTLSMMTTPLLMQVI). The RCK N-terminal domain maps to 400–521 (EPQVIVVGFG…VRHFSRETFS (122 aa)).

This sequence belongs to the monovalent cation:proton antiporter 2 (CPA2) transporter (TC 2.A.37) family. KefB subfamily. In terms of assembly, interacts with the regulatory subunit KefG.

It is found in the cell inner membrane. In terms of biological role, pore-forming subunit of a potassium efflux system that confers protection against electrophiles. Catalyzes K(+)/H(+) antiport. In Pectobacterium atrosepticum (strain SCRI 1043 / ATCC BAA-672) (Erwinia carotovora subsp. atroseptica), this protein is Glutathione-regulated potassium-efflux system protein KefB.